The following is a 264-amino-acid chain: Ion-translocating oxidoreductase complex subunit B (264 aa).

Residues 5–25 (LINSIAVLAGLGFAVGVMLVI) form a helical membrane-spanning segment. Residues 33–92 (DSNPLIDDVASLLPGANCGGCGFAGCAACAEAIVEQGAPVNSCPVGGFEVAKQIGALLGQ) enclose the 4Fe-4S domain. Residues Cys-50, Cys-53, Cys-58, Cys-75, Cys-138, Cys-142, Cys-148, Cys-152, Cys-172, Cys-175, Cys-178, Cys-182, Cys-217, Cys-220, Cys-223, Cys-227, Cys-246, Cys-249, Cys-252, and Cys-256 each contribute to the [4Fe-4S] cluster site. 4 4Fe-4S ferredoxin-type domains span residues 127–162 (VALMLCDSRKGCTYGCLGLGTCVQACQFGALSMGED), 163–192 (GFPVVNKALCTSCGNCIAACPNGVLTFARD), 207–236 (KDVKAVCEVGCIGCKKCEKECPAGAIRVTE), and 237–264 (FLAEIDQEKCTACGACVAICPQKAIELR).

It belongs to the 4Fe4S bacterial-type ferredoxin family. RnfB subfamily. In terms of assembly, the Rnf complex is probably composed of eight subunits, including RnfA, RnfB, RnfC, RnfD, RnfE and RnfG. It depends on [4Fe-4S] cluster as a cofactor.

The protein resides in the cell membrane. In terms of biological role, part of a membrane-bound complex that couples electron transfer with translocation of ions across the membrane. Catalyzes Na(+) transport, most probably coupled to electron transfer from reduced ferredoxin to methanophenazine and heterodisulfide reductase. Involved in heterodisulfide reduction during methanogenesis from acetate. The protein is Ion-translocating oxidoreductase complex subunit B of Methanosarcina acetivorans (strain ATCC 35395 / DSM 2834 / JCM 12185 / C2A).